Reading from the N-terminus, the 92-residue chain is Putative membrane protein insertion efficiency factor (92 aa).

The protein belongs to the UPF0161 family.

Its subcellular location is the cell membrane. Its function is as follows. Could be involved in insertion of integral membrane proteins into the membrane. The sequence is that of Putative membrane protein insertion efficiency factor from Tropheryma whipplei (strain TW08/27) (Whipple's bacillus).